The following is a 218-amino-acid chain: Elongation factor Ts (218 aa).

Residues 82-85 (TDFV) form an involved in Mg(2+) ion dislocation from EF-Tu region.

The protein belongs to the EF-Ts family.

It is found in the cytoplasm. Its function is as follows. Associates with the EF-Tu.GDP complex and induces the exchange of GDP to GTP. It remains bound to the aminoacyl-tRNA.EF-Tu.GTP complex up to the GTP hydrolysis stage on the ribosome. This chain is Elongation factor Ts, found in Prochlorococcus marinus (strain NATL1A).